Reading from the N-terminus, the 436-residue chain is Elongation factor 1-alpha (436 aa).

A tr-type G domain is found at 8–232 (KPHLNMIVTG…DDFKMAEKPV (225 aa)). Residues 17 to 24 (GHIDNGKS) are G1. Position 17-24 (17-24 (GHIDNGKS)) interacts with GTP. Residue Ser-24 participates in Mg(2+) binding. The G2 stretch occupies residues 74 to 78 (GITID). Positions 95 to 98 (DAPG) are G3. Residues 95-99 (DAPGH) and 157-160 (NKMD) each bind GTP. The tract at residues 157–160 (NKMD) is G4. A G5 region spans residues 196-198 (SGW).

Belongs to the TRAFAC class translation factor GTPase superfamily. Classic translation factor GTPase family. EF-Tu/EF-1A subfamily.

It localises to the cytoplasm. It catalyses the reaction GTP + H2O = GDP + phosphate + H(+). GTP hydrolase that promotes the GTP-dependent binding of aminoacyl-tRNA to the A-site of ribosomes during protein biosynthesis. This Cenarchaeum symbiosum (strain A) protein is Elongation factor 1-alpha.